Here is a 170-residue protein sequence, read N- to C-terminus: Adenine phosphoribosyltransferase (170 aa).

This sequence belongs to the purine/pyrimidine phosphoribosyltransferase family. As to quaternary structure, homodimer.

It localises to the cytoplasm. The enzyme catalyses AMP + diphosphate = 5-phospho-alpha-D-ribose 1-diphosphate + adenine. Its pathway is purine metabolism; AMP biosynthesis via salvage pathway; AMP from adenine: step 1/1. Functionally, catalyzes a salvage reaction resulting in the formation of AMP, that is energically less costly than de novo synthesis. The protein is Adenine phosphoribosyltransferase of Flavobacterium johnsoniae (strain ATCC 17061 / DSM 2064 / JCM 8514 / BCRC 14874 / CCUG 350202 / NBRC 14942 / NCIMB 11054 / UW101) (Cytophaga johnsonae).